An 862-amino-acid polypeptide reads, in one-letter code: DNA mismatch repair protein MutS (862 aa).

603–610 (GPNMSGKS) contacts ATP.

The protein belongs to the DNA mismatch repair MutS family.

In terms of biological role, this protein is involved in the repair of mismatches in DNA. It is possible that it carries out the mismatch recognition step. This protein has a weak ATPase activity. In Bacillus velezensis (strain DSM 23117 / BGSC 10A6 / LMG 26770 / FZB42) (Bacillus amyloliquefaciens subsp. plantarum), this protein is DNA mismatch repair protein MutS.